Consider the following 274-residue polypeptide: tRNA-cytidine(32) 2-sulfurtransferase (274 aa).

Positions 40–45 (SGGKDS) match the PP-loop motif motif. [4Fe-4S] cluster is bound by residues Cys-115, Cys-118, and Cys-206.

The protein belongs to the TtcA family. Homodimer. Mg(2+) is required as a cofactor. Requires [4Fe-4S] cluster as cofactor.

The protein localises to the cytoplasm. The enzyme catalyses cytidine(32) in tRNA + S-sulfanyl-L-cysteinyl-[cysteine desulfurase] + AH2 + ATP = 2-thiocytidine(32) in tRNA + L-cysteinyl-[cysteine desulfurase] + A + AMP + diphosphate + H(+). It functions in the pathway tRNA modification. Its function is as follows. Catalyzes the ATP-dependent 2-thiolation of cytidine in position 32 of tRNA, to form 2-thiocytidine (s(2)C32). The sulfur atoms are provided by the cysteine/cysteine desulfurase (IscS) system. The polypeptide is tRNA-cytidine(32) 2-sulfurtransferase (Pseudomonas putida (strain ATCC 47054 / DSM 6125 / CFBP 8728 / NCIMB 11950 / KT2440)).